The following is a 34-amino-acid chain: Photosystem II reaction center protein Psb30 (34 aa).

The chain crosses the membrane as a helical span at residues 5–25 (VLAQLTVLAFVIAVGPITLIW).

The protein belongs to the Psb30/Ycf12 family. PSII is composed of 1 copy each of membrane proteins PsbA, PsbB, PsbC, PsbD, PsbE, PsbF, PsbH, PsbI, PsbJ, PsbK, PsbL, PsbM, PsbT, PsbX, PsbY, PsbZ, Psb30/Ycf12, peripheral proteins of the oxygen-evolving complex and a large number of cofactors. It forms dimeric complexes.

It is found in the plastid. The protein resides in the chloroplast thylakoid membrane. A core subunit of photosystem II (PSII), probably helps stabilize the reaction center. The polypeptide is Photosystem II reaction center protein Psb30 (Cyanidioschyzon merolae (strain NIES-3377 / 10D) (Unicellular red alga)).